We begin with the raw amino-acid sequence, 623 residues long: Pentatricopeptide repeat-containing protein At5g15340, mitochondrial (623 aa).

Residues 1–16 (MKCLSYQKVRLLLRHC) constitute a mitochondrion transit peptide. 11 PPR repeats span residues 42–72 (RSYL…IPLS), 75–109 (DNVD…RVEI), 110–144 (DDVS…GVLT), 145–179 (SVKV…SVVS), 180–206 (WTVV…MPER), 207–237 (NAVA…MVFR), 243–277 (NFVT…EMMM), 285–319 (DVMV…NVVT), 320–346 (WNAL…MIRE), 350–384 (DDLT…GLEP), and 385–419 (KVDH…PNEV). The type E motif stretch occupies residues 420–495 (VLGSLLGSCS…IPGLSSIYVN (76 aa)). The tract at residues 496–526 (DSVHRFSSGDRSHPRTKEIYLKLNEVIERIR) is type E(+) motif. The type DYW motif stretch occupies residues 527–623 (SAGYVPDVSG…GGSCSCSDYW (97 aa)).

Belongs to the PPR family. PCMP-H subfamily.

It localises to the mitochondrion. The polypeptide is Pentatricopeptide repeat-containing protein At5g15340, mitochondrial (PCMP-H91) (Arabidopsis thaliana (Mouse-ear cress)).